Reading from the N-terminus, the 432-residue chain is Guanine nucleotide-binding protein subunit alpha (432 aa).

Residues 1 to 97 (MGGCMSTPEA…SKGNKDRSNQ (97 aa)) are disordered. A lipid anchor (N-myristoyl glycine) is attached at Gly2. Cys4 carries S-palmitoyl cysteine lipidation. A compositionally biased stretch (low complexity) spans 21–52 (PSTSTSSRPPQASTSATATAAGAGTSAANGTA). Positions 111–432 (KECKILLLGS…QNALRDSGIL (322 aa)) constitute a G-alpha domain. The interval 114 to 127 (KILLLGSGESGKST) is G1 motif. Positions 122, 123, 124, 125, 126, 127, 230, 255, 261, 283, 349, 350, 352, and 404 each coordinate GTP. Mg(2+) is bound at residue Ser126. Residues 253–261 (DVLRARTKT) form a G2 motif region. Thr261 serves as a coordination point for Mg(2+). A G3 motif region spans residues 276–285 (IHMFDVGGQR). The tract at residues 345 to 352 (ILFLNKID) is G4 motif. The tract at residues 402 to 407 (TQATDT) is G5 motif.

Belongs to the G-alpha family. As to quaternary structure, g proteins are composed of 3 units; alpha, beta and gamma. The alpha chain contains the guanine nucleotide binding site. It depends on Mg(2+) as a cofactor.

In terms of biological role, guanine nucleotide-binding proteins (G proteins) are involved as modulators or transducers in various transmembrane signaling systems. Involved in the mating pathway. This Cryptococcus neoformans var. neoformans serotype D (strain B-3501A) (Filobasidiella neoformans) protein is Guanine nucleotide-binding protein subunit alpha (GPA1).